A 345-amino-acid polypeptide reads, in one-letter code: Dihydroorotase (345 aa).

Residues histidine 14 and histidine 16 each coordinate Zn(2+). Substrate is bound by residues 16–18 (HLR) and asparagine 42. Zn(2+) is bound by residues lysine 102, histidine 139, and histidine 177. Lysine 102 carries the N6-carboxylysine modification. Histidine 139 is a binding site for substrate. Leucine 222 is a substrate binding site. A Zn(2+)-binding site is contributed by aspartate 250. The active site involves aspartate 250. Residues histidine 254 and alanine 266 each contribute to the substrate site.

The protein belongs to the metallo-dependent hydrolases superfamily. DHOase family. Class II DHOase subfamily. As to quaternary structure, homodimer. Requires Zn(2+) as cofactor.

The enzyme catalyses (S)-dihydroorotate + H2O = N-carbamoyl-L-aspartate + H(+). Its pathway is pyrimidine metabolism; UMP biosynthesis via de novo pathway; (S)-dihydroorotate from bicarbonate: step 3/3. Its function is as follows. Catalyzes the reversible cyclization of carbamoyl aspartate to dihydroorotate. The chain is Dihydroorotase from Nitrosomonas eutropha (strain DSM 101675 / C91 / Nm57).